The following is a 160-amino-acid chain: uncharacterized protein (160 aa).

The chain crosses the membrane as a helical span at residues 27–47 (VMNSYFIAGCGPAVCYYAVSW).

It localises to the membrane. This is an uncharacterized protein from Homo sapiens (Human).